A 664-amino-acid chain; its full sequence is Lysophospholipase 1 (664 aa).

The signal sequence occupies residues 1 to 22 (MKLQSLLVSAAVLTSLTENVNA). N-linked (GlcNAc...) asparagine glycosylation is found at Asn-26, Asn-33, Asn-52, Asn-78, Asn-92, Asn-123, Asn-160, Asn-170, Asn-215, Asn-277, Asn-307, Asn-345, Asn-388, Asn-459, Asn-489, Asn-513, Asn-541, Asn-565, and Asn-582. Positions 35–586 (TCDDDINLVR…TNYCWNGTID (552 aa)) constitute a PLA2c domain. Asn-634 carries the GPI-anchor amidated asparagine lipid modification. Positions 635–664 (AGNALVNYSNLNTNTFIGVLSVISAVFGLI) are cleaved as a propeptide — removed in mature form.

The protein belongs to the lysophospholipase family.

It is found in the cell membrane. The enzyme catalyses a 1-acyl-sn-glycero-3-phosphocholine + H2O = sn-glycerol 3-phosphocholine + a fatty acid + H(+). The catalysed reaction is a 1-acyl-sn-glycero-3-phospho-(1D-myo-inositol) + H2O = sn-glycero-3-phospho-1D-myo-inositol + a fatty acid + H(+). It carries out the reaction a 1-acyl-sn-glycero-3-phospho-L-serine + H2O = sn-glycero-3-phospho-L-serine + a fatty acid + H(+). It catalyses the reaction a 1,2-diacyl-sn-glycero-3-phospho-(1D-myo-inositol) + 2 H2O = sn-glycero-3-phospho-1D-myo-inositol + 2 a carboxylate + 2 H(+). The enzyme catalyses a 1,2-diacyl-sn-glycero-3-phospho-L-serine + 2 H2O = sn-glycero-3-phospho-L-serine + 2 a carboxylate + 2 H(+). The catalysed reaction is 2 1-hexadecanoyl-sn-glycero-3-phosphocholine = 1,2-dihexadecanoyl-sn-glycero-3-phosphocholine + sn-glycerol 3-phosphocholine. It carries out the reaction 1-hexadecanoyl-sn-glycero-3-phosphocholine + H2O = sn-glycerol 3-phosphocholine + hexadecanoate + H(+). It catalyses the reaction 1,2-dihexadecanoyl-sn-glycero-3-phosphocholine + H2O = 1-hexadecanoyl-sn-glycero-3-phosphocholine + hexadecanoate + H(+). In terms of biological role, sequentially removes both fatty acyl groups from diacylglycerophospholipids and therefore has both phospholipase B and lysophospholipase activities. It also displays transacylase activity. Substrate preference is phosphatidylserine &gt; phosphatidylinositol &gt;&gt; phosphatidylcholine &gt; phosphatidylethanolamine. The substrate specificity is pH- and ion-dependent. In contrast with activities observed at optimum pH 3.5, the order of substrate preference at pH 5.5 is phosphatidylcholine = phosphatidylethanolamine &gt;&gt; phosphatidylinositol. Degrades predominantly phosphatidylcholine and to some extent phosphatidylinositol in vivo. The sequence is that of Lysophospholipase 1 from Saccharomyces cerevisiae (strain ATCC 204508 / S288c) (Baker's yeast).